Consider the following 94-residue polypeptide: uncharacterized protein (94 aa).

This is an uncharacterized protein from Saccharolobus islandicus (Sulfolobus islandicus).